A 206-amino-acid polypeptide reads, in one-letter code: Protein phosphatase inhibitor 2 (206 aa).

The disordered stretch occupies residues 1–36; the sequence is MAASTASHRPIKGILKNKTSAASPPVVPSAEQPRPI. Ala-2 carries the post-translational modification N-acetylalanine. The tract at residues 12 to 17 is required for binding PPP1CC; sequence KGILKN. The tract at residues 44-56 is required for binding the 'RVXF' binding groove of PPP1CC; it reads KSQKWDEMNILAT. Ser-45 is subject to Phosphoserine; by ATM. Thr-74 carries the post-translational modification Phosphothreonine. Residues 75–143 form a disordered region; it reads PYHNMIGDDE…EREKKRQFEM (69 aa). Acidic residues predominate over residues 81–92; it reads GDDEDAYSDSEG. Phosphoserine occurs at positions 88 and 90. Residues Thr-97 and Thr-117 each carry the phosphothreonine modification. Residues 111–121 are compositionally biased toward basic and acidic residues; it reads SEPKYRTREQE. Phosphoserine occurs at positions 122, 123, and 131. Over residues 122-131 the composition is skewed to acidic residues; sequence SSGEEDNDLS. The segment covering 132–143 has biased composition (basic and acidic residues); it reads PEEREKKRQFEM. A required for binding PPP1CC catalytic center, displacing metal ions and inhibition of PPP1CC catalytic activity region spans residues 148-151; it reads HYNE. The interval 164–206 is disordered; it reads KDLHDDDEDEEMAETADGDSMNVEESSQGSTTSDHLQHKSQSS. Residues 168-180 are compositionally biased toward acidic residues; it reads DDDEDEEMAETAD. Residues 186 to 206 are compositionally biased toward polar residues; the sequence is VEESSQGSTTSDHLQHKSQSS.

The protein belongs to the protein phosphatase inhibitor 2 family. In terms of assembly, heterodimer with PP1. In terms of processing, phosphorylation on Ser-45 by ATM activates PP1 by dissociating the PP1-PPP1R2 complex. Phosphorylation on Thr-74 by GSK3 activates PP1 by dissociating the PP1-PPP1R2 complex.

In terms of biological role, inhibitor of protein-phosphatase 1. This chain is Protein phosphatase inhibitor 2 (Ppp1r2), found in Mus musculus (Mouse).